A 523-amino-acid polypeptide reads, in one-letter code: Leghemoglobin reductase (523 aa).

The N-terminal 30 residues, 1–30 (MAMASLARRKAYAVVSSSRSSVFLTSLRGF), are a transit peptide targeting the mitochondrion. FAD contacts are provided by residues 66-75 (EKRGTLGGTC), Lys84, Gly148, and 177-179 (TGS). A disulfide bond links Cys75 and Cys80. NAD(+) is bound by residues 214–221 (GAGYIGLE), Glu237, Val271, and Gly306. Residues Asp347 and 353 to 356 (MLAH) contribute to the FAD site. The active-site Proton acceptor is His479.

The protein belongs to the class-I pyridine nucleotide-disulfide oxidoreductase family. As to quaternary structure, homodimer. FAD serves as cofactor.

It localises to the mitochondrion. It carries out the reaction 2 Fe(III)-[leghemoglobin] + NADH = 2 Fe(II)-[leghemoglobin] + NAD(+) + H(+). The catalysed reaction is 2 Fe(III)-[leghemoglobin] + NADPH = 2 Fe(II)-[leghemoglobin] + NADP(+) + H(+). Its function is as follows. Reduces ferric leghemoglobin (Lb) to ferrous Lb. This Vigna unguiculata (Cowpea) protein is Leghemoglobin reductase (FLBR).